The chain runs to 480 residues: Voltage-gated potassium channel regulatory subunit KCNG2 (480 aa).

Disordered stretches follow at residues 1 to 25 (MARL…GRGG) and 144 to 167 (AAEA…LGSG). Residues 1–187 (MARLPGHPEV…DVVENPHSGL (187 aa)) lie on the Cytoplasmic side of the membrane. Residues 188 to 209 (AGKLFAYVSVAFVAVTAVGLCL) traverse the membrane as a helical segment. Residues 210–230 (STMPDVRAEEERGECSTKCRN) are Extracellular-facing. Residues 231–252 (LFVLETVCVAWFSFEFLLRSLQ) form a helical membrane-spanning segment. The Cytoplasmic portion of the chain corresponds to 253 to 263 (AESKCAFLRTP). A helical transmembrane segment spans residues 264–284 (LAIIDILAILPFYVSLLAGLA). The Extracellular segment spans residues 285–296 (AGPTGSKMLERA). A helical; Voltage-sensor transmembrane segment spans residues 297 to 317 (GLVLRLLRALRVLYVMRLARH). The Cytoplasmic portion of the chain corresponds to 318 to 332 (SLGLRSLGLTVRRCA). Residues 333 to 354 (REFGLLLLFLCVAMALFAPLVH) traverse the membrane as a helical segment. The Extracellular portion of the chain corresponds to 355-369 (LAERELGAHRDFSSV). Positions 370–381 (PASYWWAVISMT) form an intramembrane region, helical. Positions 382-387 (TVGYGD) match the Selectivity filter motif. Residues 382–389 (TVGYGDMV) lie within the membrane without spanning it. Residues 390-396 (PRSLPGQ) lie on the Extracellular side of the membrane. Residues 397–425 (VVALSSILSGILLMAFPVTSIFHTFSRSY) traverse the membrane as a helical segment. Residues 426–480 (SELKEQQQRAASPEPVLREDSTRDDSTRSASATEDSSQDPETAGAAGSLPGPVGP) are Cytoplasmic-facing. Residues 429–480 (KEQQQRAASPEPVLREDSTRDDSTRSASATEDSSQDPETAGAAGSLPGPVGP) are disordered. Over residues 441–452 (VLREDSTRDDST) the composition is skewed to basic and acidic residues.

It belongs to the potassium channel family. G (TC 1.A.1.2) subfamily. Kv6.2/KCNG2 sub-subfamily. Heterodimer with KCNB1. As to expression, highly expressed in heart, in particular in right and left atrium, and detected at lower levels in the right and left ventricle.

The protein localises to the cell membrane. In terms of biological role, regulatory alpha-subunit of the voltage-gated potassium (Kv) channel which, when coassembled with KCNB1, can modulate the kinetics and conductance-voltage relationship. Modulates channel activity by shifting the threshold and the half-maximal activation to more negative values. Potassium channel subunit that does not form functional channels by itself. This is Voltage-gated potassium channel regulatory subunit KCNG2 from Rattus norvegicus (Rat).